A 151-amino-acid chain; its full sequence is UPF0178 protein CJA_1978 (151 aa).

The protein belongs to the UPF0178 family.

The sequence is that of UPF0178 protein CJA_1978 from Cellvibrio japonicus (strain Ueda107) (Pseudomonas fluorescens subsp. cellulosa).